We begin with the raw amino-acid sequence, 253 residues long: Tryptophan synthase alpha chain (253 aa).

Residues Glu45 and Asp56 each act as proton acceptor in the active site.

This sequence belongs to the TrpA family. In terms of assembly, tetramer of two alpha and two beta chains.

The enzyme catalyses (1S,2R)-1-C-(indol-3-yl)glycerol 3-phosphate + L-serine = D-glyceraldehyde 3-phosphate + L-tryptophan + H2O. It participates in amino-acid biosynthesis; L-tryptophan biosynthesis; L-tryptophan from chorismate: step 5/5. In terms of biological role, the alpha subunit is responsible for the aldol cleavage of indoleglycerol phosphate to indole and glyceraldehyde 3-phosphate. This chain is Tryptophan synthase alpha chain, found in Flavobacterium johnsoniae (strain ATCC 17061 / DSM 2064 / JCM 8514 / BCRC 14874 / CCUG 350202 / NBRC 14942 / NCIMB 11054 / UW101) (Cytophaga johnsonae).